Here is a 786-residue protein sequence, read N- to C-terminus: E3 ubiquitin-protein ligase pub3 (786 aa).

The C2 domain occupies 1-109 (MEQGAKRVRF…RSNREVSLTR (109 aa)). 2 disordered regions span residues 134-225 (IRAP…NSNA) and 263-306 (TWTR…DSGN). The span at 142-193 (SSTTANRTTSTPTTTTARTTRTTPRPTATTNTSNQSTSNSTRNGTSAATSNG) shows a compositional bias: low complexity. Over residues 204-213 (HRSSPVTNRQ) the composition is skewed to polar residues. Residues 214–225 (TNNTSALSNSNA) show a composition bias toward low complexity. The WW 1 domain occupies 236–269 (GRLPPGWERRADSLGRTYYVDHNTRTTTWTRPAS). 2 stretches are compositionally biased toward polar residues: residues 263–285 (TWTR…QRLN) and 295–305 (SNPSLMQSDSG). 2 consecutive WW domains span residues 306–339 (NDLP…DPRN) and 364–397 (GPLP…DPRL). In terms of domain architecture, HECT spans 453 to 786 (SAHDLKKRLM…VENTVGFGNE (334 aa)). Cysteine 754 acts as the Glycyl thioester intermediate in catalysis.

The enzyme catalyses S-ubiquitinyl-[E2 ubiquitin-conjugating enzyme]-L-cysteine + [acceptor protein]-L-lysine = [E2 ubiquitin-conjugating enzyme]-L-cysteine + N(6)-ubiquitinyl-[acceptor protein]-L-lysine.. It participates in protein modification; protein ubiquitination. Functionally, E3 ubiquitin-protein ligase which accepts ubiquitin from an E2 ubiquitin-conjugating enzyme in the form of a thioester and then directly transfers the ubiquitin to targeted substrates. In Schizosaccharomyces pombe (strain 972 / ATCC 24843) (Fission yeast), this protein is E3 ubiquitin-protein ligase pub3 (pub3).